The sequence spans 217 residues: Large ribosomal subunit protein bL21m (217 aa).

Over residues 61–81 the composition is skewed to low complexity; that stretch reads PPKVTTATTPEAPAAVPTSTP. The tract at residues 61–87 is disordered; sequence PPKVTTATTPEAPAAVPTSTPFSQQPP.

The protein belongs to the bacterial ribosomal protein bL21 family. As to quaternary structure, component of the mitochondrial large ribosomal subunit (mt-LSU). Mature N.crassa 74S mitochondrial ribosomes consist of a small (37S) and a large (54S) subunit. The 37S small subunit contains a 16S ribosomal RNA (16S mt-rRNA) and 32 different proteins. The 54S large subunit contains a 23S rRNA (23S mt-rRNA) and 42 different proteins.

The protein resides in the mitochondrion. In terms of biological role, component of the mitochondrial ribosome (mitoribosome), a dedicated translation machinery responsible for the synthesis of mitochondrial genome-encoded proteins, including at least some of the essential transmembrane subunits of the mitochondrial respiratory chain. The mitoribosomes are attached to the mitochondrial inner membrane and translation products are cotranslationally integrated into the membrane. The chain is Large ribosomal subunit protein bL21m (mrpl49) from Neurospora crassa (strain ATCC 24698 / 74-OR23-1A / CBS 708.71 / DSM 1257 / FGSC 987).